The following is a 332-amino-acid chain: DNA-directed RNA polymerase 2A (332 aa).

Active-site residues include Asp-33, Lys-108, and Asp-265.

This sequence belongs to the phage and mitochondrial RNA polymerase family.

It catalyses the reaction RNA(n) + a ribonucleoside 5'-triphosphate = RNA(n+1) + diphosphate. Functionally, DNA-dependent RNA polymerase catalyzes the transcription of DNA into RNA using the four ribonucleoside triphosphates as substrates. The polypeptide is DNA-directed RNA polymerase 2A (RPOT2-SYL) (Nicotiana tabacum (Common tobacco)).